We begin with the raw amino-acid sequence, 176 residues long: Probable DNA-directed RNA polymerase subunit delta (176 aa).

Residues 14-81 (CSMIEVVHSV…GENRWGLRSW (68 aa)) form the HTH HARE-type domain. Positions 90 to 176 (EILPQPKPKK…ETEEEEEEEL (87 aa)) are disordered. The segment covering 106–176 (DGFDDYIEED…ETEEEEEEEL (71 aa)) has biased composition (acidic residues).

It belongs to the RpoE family. In terms of assembly, RNAP is composed of a core of 2 alpha, a beta and a beta' subunits. The core is associated with a delta subunit and one of several sigma factors.

In terms of biological role, participates in both the initiation and recycling phases of transcription. In the presence of the delta subunit, RNAP displays an increased specificity of transcription, a decreased affinity for nucleic acids, and an increased efficiency of RNA synthesis because of enhanced recycling. This is Probable DNA-directed RNA polymerase subunit delta from Bacillus thuringiensis subsp. konkukian (strain 97-27).